The primary structure comprises 118 residues: Small ribosomal subunit protein uS17 (118 aa).

Belongs to the universal ribosomal protein uS17 family. In terms of assembly, part of the 30S ribosomal subunit.

Its function is as follows. One of the primary rRNA binding proteins, it binds specifically to the 5'-end of 16S ribosomal RNA. The chain is Small ribosomal subunit protein uS17 from Methanopyrus kandleri (strain AV19 / DSM 6324 / JCM 9639 / NBRC 100938).